We begin with the raw amino-acid sequence, 174 residues long: Recombination protein RecR (174 aa).

The segment at 30–45 adopts a C4-type zinc-finger fold; the sequence is CNACRTFTEEEECTIC. Residues 54 to 149 form the Toprim domain; that stretch reads GQLCIVEMPE…KVTRIAHGIP (96 aa).

Belongs to the RecR family.

Its function is as follows. May play a role in DNA repair. It seems to be involved in an RecBC-independent recombinational process of DNA repair. It may act with RecF and RecO. The sequence is that of Recombination protein RecR from Haemophilus ducreyi (strain 35000HP / ATCC 700724).